Reading from the N-terminus, the 301-residue chain is Large ribosomal subunit protein uL18 (301 aa).

Basic and acidic residues predominate over residues 257–271 (NPERVKSTKKNDKPK). The tract at residues 257–283 (NPERVKSTKKNDKPKRDHKKFYPTKLT) is disordered.

The protein belongs to the universal ribosomal protein uL18 family. In terms of assembly, component of the large ribosomal subunit (LSU).

The protein resides in the cytoplasm. The protein localises to the nucleus. Functionally, component of the ribosome, a large ribonucleoprotein complex responsible for the synthesis of proteins in the cell. The small ribosomal subunit (SSU) binds messenger RNAs (mRNAs) and translates the encoded message by selecting cognate aminoacyl-transfer RNA (tRNA) molecules. The large subunit (LSU) contains the ribosomal catalytic site termed the peptidyl transferase center (PTC), which catalyzes the formation of peptide bonds, thereby polymerizing the amino acids delivered by tRNAs into a polypeptide chain. The nascent polypeptides leave the ribosome through a tunnel in the LSU and interact with protein factors that function in enzymatic processing, targeting, and the membrane insertion of nascent chains at the exit of the ribosomal tunnel. This chain is Large ribosomal subunit protein uL18 (RPL5), found in Tetrahymena thermophila (strain SB210).